The following is a 355-amino-acid chain: Olfactory receptor 1I1 (355 aa).

At Met-1–Thr-25 the chain is on the extracellular side. A helical membrane pass occupies residues Leu-26–Ile-49. The Cytoplasmic segment spans residues Ile-50–Thr-57. A helical transmembrane segment spans residues Pro-58 to Pro-79. Residues Lys-80 to Gln-100 are Extracellular-facing. Residues Met-101–Ile-120 form a helical membrane-spanning segment. The Cytoplasmic segment spans residues Asp-121–Pro-139. A helical membrane pass occupies residues Val-140–Ile-158. Residues His-159–Asn-195 are Extracellular-facing. The helical transmembrane segment at Glu-196–Ile-219 threads the bilayer. Topologically, residues Arg-220–Lys-236 are cytoplasmic. Residues Ala-237 to Tyr-259 traverse the membrane as a helical segment. At Leu-260–Lys-272 the chain is on the extracellular side. A helical membrane pass occupies residues Ala-273–Ile-292. The Cytoplasmic segment spans residues Arg-293–Glu-355.

The protein belongs to the G-protein coupled receptor 1 family.

It localises to the cell membrane. Functionally, odorant receptor. This Homo sapiens (Human) protein is Olfactory receptor 1I1 (OR1I1).